Reading from the N-terminus, the 411-residue chain is Phosphoglycerate kinase (411 aa).

Substrate-binding positions include 19 to 21 (DLN), Arg-34, 57 to 60 (HQSR), Arg-114, and Arg-154. Residues Glu-332 and 358-361 (GGHS) contribute to the ATP site.

The protein belongs to the phosphoglycerate kinase family. Monomer.

The protein resides in the cytoplasm. It catalyses the reaction (2R)-3-phosphoglycerate + ATP = (2R)-3-phospho-glyceroyl phosphate + ADP. Its pathway is carbohydrate degradation; glycolysis; pyruvate from D-glyceraldehyde 3-phosphate: step 2/5. The sequence is that of Phosphoglycerate kinase from Thermococcus kodakarensis (strain ATCC BAA-918 / JCM 12380 / KOD1) (Pyrococcus kodakaraensis (strain KOD1)).